The primary structure comprises 1175 residues: MKTRQNKDSMSMRSGRKKEAPGPREELRSRGRASPGGVSTSSSDGKAEKSRQTAKKARIEEPSAPKASKQGRSEEISESESEETSAPKKTKTEQELPRPQSPSDLDSLDGRSINDDGSSDPRDIDQDNRSTSPSIYSPGSVENDSDSSSGLSQGPARPYHPPPLFPPSPPPPDSTPRQPESGFEPHPSVPPTGYHAPMEPPTSRLFQGPPPGAPPTHPQLYPGNASGGVLSGPPMGPKGGAAASSVGAPSGGKQHPPPTTPIPISSSGASGAPPAKPPSAPVGGGSLPSAPPPASFPHVTPNLPPPPALRPLNNASASPPGMGAQPIPGHLPSPHAMGQGMSGLPPGPEKGPTLAPSPHPLPPASSSAPGPPMRYPYSSSSSSAAASSSSSSSSASQYPASQALPSYPHSFPPPTSMSVSNQPPKYTQPSLPSQAVWSQGPPPPPPYGRLLANNNTHPGPFPPTGGQSTAHPAAPTHHHHQQQPQQQHHHGNSGPPPPGAYPHPLESSNSHHAHPYNMSPSLGSLRPYPPGPAHLPPPHGQVSYNQAGPNGPPVSSSNSSGSSSQASYSCSHPSSSQGPQGASYPFPPVPPVTTSSATLSTVIATVASSPAGYKTASPPGPPQYSKRAPSPGSYKTATPPGYKPGSPPSFRTGTPPGYRGTSPPAGPGTFKPGSPTVGPGPLPPAGPSSLSSLPPPPAAPTTGPPLTATQIKQEPAEEYEPPESPVPPARSPSPPPKVVDVPSHASQSARFNKHLDRGFNSCARSDLYFVPLEGSKLAKKRADLVEKVRREAEQRAREEKEREREREREKEREREKERELERSVKLAQEGRAPVECPSLGPVPHRPPFEPGSAVATVPPYLGPDTPALRTLSEYARPHVMSPGNRNHPFYVPLGAVDPGLLGYNVPALYSSDPAAREREREARERDLRDRLKPGFEVKPSELEPLHGVPGPGLDPFPRHGGLALQPGPPGLHPFPFHPSLGPLERERLALAAGPALRPDMSYAERLAAERQHAERVAALGNDPLARLQMLNVTPHHHQHSHIHSHLHLHQQDAIHAASASVHPLIDPLASGSHLTRIPYPAGTLPNPLLPHPLHENEVLRHQLFAAPYRDLPASLSAPMSAAHQLQAMHAQSAELQRLALEQQQWLHAHHPLHSVPLPAQEDYYSHLKKESDKPL.

Disordered regions lie at residues M1–S595, S608–N752, and V770–P847. The Nuclear localization signal signature appears at R16–R32. Over residues K17–S29 the composition is skewed to basic and acidic residues. The residue at position 34 (S34) is a Phosphoserine. Residues G45–S63 are compositionally biased toward basic and acidic residues. A phosphoserine mark is found at S77, S79, S101, S103, and S107. Basic and acidic residues predominate over residues L108–N128. Residues R129 to S152 are compositionally biased toward polar residues. 2 stretches are compositionally biased toward pro residues: residues P158–S174 and G208–H217. 2 stretches are compositionally biased toward low complexity: residues G240–K253 and I262–P273. Positions P345–R374 are enriched in pro residues. Low complexity predominate over residues S378–S396. Over residues S416 to W437 the composition is skewed to polar residues. The span at T476–G491 shows a compositional bias: basic residues. Residues H503–P553 form an involved in binding BAIAP2 region. Residues P527–H539 are compositionally biased toward pro residues. A compositionally biased stretch (low complexity) spans A547–Y584. A Phosphoserine modification is found at S617. K626 carries the N6-acetyllysine modification. Phosphothreonine is present on T638. S646 bears the Phosphoserine mark. Position 654 is a phosphothreonine (T654). Pro residues-rich tracts occupy residues L693 to G703 and P722 to K737. A Phosphoserine; by MAPK8 modification is found at S724. Phosphoserine occurs at positions 731 and 733. Residues K780–V824 are compositionally biased toward basic and acidic residues. The interval D864–V879 is required for interaction with FAT1. A Phosphoserine modification is found at S881. The interval P913–K932 is disordered. Positions A914–K932 are enriched in basic and acidic residues. A Nuclear export signal motif is present at residues A1018–R1026. R1100 is subject to Asymmetric dimethylarginine. K1168 is covalently cross-linked (Glycyl lysine isopeptide (Lys-Gly) (interchain with G-Cter in SUMO2)).

Interacts with BAIAP2, WWP1, WWP2, WWP3 and RERE. Interacts (via its N-terminus) with MTG8; the interaction enhances transcriptional repression of MTG8. Interacts with PQBP1. Interacts with NR2E1; the interaction represses the transcriptional activity of NR2E1. Interacts with FAT1 (via a C-terminal domain). Post-translationally, phosphorylated in vitro by MAPK8/JNK1 on Ser-724. In terms of tissue distribution, widely expressed. Most abundant in the brain.

The protein localises to the cytoplasm. Its subcellular location is the perinuclear region. The protein resides in the cell junction. It localises to the nucleus. Functionally, transcriptional corepressor. Corepressor of MTG8 transcriptional repression. Has some intrinsic repression activity which is independent of the number of the poly-Q repeats. Recruits NR2E1 to repress transcription. Promotes vascular smooth cell (VSMC) migration and orientation. In Mus musculus (Mouse), this protein is Atrophin-1 (Atn1).